The sequence spans 227 residues: Transcriptional regulatory protein TdiR (227 aa).

One can recognise a Response regulatory domain in the interval 11-125; that stretch reads TVFVVDDEAS…DLLDAVNAAL (115 aa). Aspartate 60 is subject to 4-aspartylphosphate. Residues 141 to 206 enclose the HTH luxR-type domain; the sequence is HLDLLATLSQ…DLMHFVMRGS (66 aa). Residues 165–184 constitute a DNA-binding region (H-T-H motif); that stretch reads SKEIAKLLGISYKTVEAHRG.

Post-translationally, phosphorylated by TdiS.

In terms of biological role, member of the two-component regulatory system TdiR/TdiS, which probably regulates transcription of toluene catabolic genes (bss operon). Binds to DNA. In Thauera aromatica, this protein is Transcriptional regulatory protein TdiR (tdiR).